A 258-amino-acid chain; its full sequence is Phosphate import ATP-binding protein PstB (258 aa).

Residues 5 to 247 (IDISGLSAFY…ERIFSNPSVQ (243 aa)) form the ABC transporter domain. 37–44 (GPSGCGKS) contributes to the ATP binding site.

This sequence belongs to the ABC transporter superfamily. Phosphate importer (TC 3.A.1.7) family. In terms of assembly, the complex is composed of two ATP-binding proteins (PstB), two transmembrane proteins (PstC and PstA) and a solute-binding protein (PstS).

The protein resides in the cell membrane. It carries out the reaction phosphate(out) + ATP + H2O = ADP + 2 phosphate(in) + H(+). Part of the ABC transporter complex PstSACB involved in phosphate import. Responsible for energy coupling to the transport system. The protein is Phosphate import ATP-binding protein PstB of Streptomyces griseus.